A 384-amino-acid polypeptide reads, in one-letter code: Cyclin-J (384 aa).

One can recognise a Cyclin N-terminal domain in the interval 15–143 (DIHQTLRYKE…LLETFEWNLC (129 aa)).

The protein belongs to the cyclin family. Cyclin J subfamily.

This is Cyclin-J (ccnj) from Xenopus laevis (African clawed frog).